The chain runs to 315 residues: D-alanine--D-alanine ligase B (315 aa).

Positions 109–309 (KKVAAAAGVV…FAELLSWMVE (201 aa)) constitute an ATP-grasp domain. 135–190 (PMKPPYVVKPVREGSSFGVVIVKEDQPHPPQVIGSADWKYGDEVMVEGYIAGRELT) is a binding site for ATP. Mg(2+) contacts are provided by aspartate 259, glutamate 276, and asparagine 278.

The protein belongs to the D-alanine--D-alanine ligase family. The cofactor is Mg(2+). It depends on Mn(2+) as a cofactor.

Its subcellular location is the cytoplasm. The enzyme catalyses 2 D-alanine + ATP = D-alanyl-D-alanine + ADP + phosphate + H(+). It functions in the pathway cell wall biogenesis; peptidoglycan biosynthesis. Functionally, cell wall formation. The protein is D-alanine--D-alanine ligase B of Brucella melitensis biotype 1 (strain ATCC 23456 / CCUG 17765 / NCTC 10094 / 16M).